The sequence spans 153 residues: FAD synthase (153 aa).

Residues Thr-9 to Phe-10, His-14 to His-17, and Asp-92 each bind ATP.

This sequence belongs to the archaeal FAD synthase family. In terms of assembly, homodimer. The cofactor is a divalent metal cation.

It carries out the reaction FMN + ATP + H(+) = FAD + diphosphate. The protein operates within cofactor biosynthesis; FAD biosynthesis; FAD from FMN: step 1/1. Its function is as follows. Catalyzes the transfer of the AMP portion of ATP to flavin mononucleotide (FMN) to produce flavin adenine dinucleotide (FAD) coenzyme. This is FAD synthase from Halorubrum lacusprofundi (strain ATCC 49239 / DSM 5036 / JCM 8891 / ACAM 34).